Consider the following 563-residue polypeptide: Lipoprotein LpqB (563 aa).

An N-terminal signal peptide occupies residues 1–19 (MRRMKALTAAMTAALLVSG). The N-palmitoyl cysteine moiety is linked to residue C20. A lipid anchor (S-diacylglycerol cysteine) is attached at C20.

Belongs to the LpqB lipoprotein family.

It localises to the cell membrane. In Corynebacterium efficiens (strain DSM 44549 / YS-314 / AJ 12310 / JCM 11189 / NBRC 100395), this protein is Lipoprotein LpqB.